Consider the following 124-residue polypeptide: Kinocilin (124 aa).

Helical transmembrane passes span L13–V33 and V40–L60. The interval P80–G124 is disordered. A compositionally biased stretch (polar residues) spans R90–R109. The span at T110–G124 shows a compositional bias: basic and acidic residues.

Preferentially expressed in the inner ear and testis. Localizes mainly in the kinocilium of sensory cells in the inner ear. Also present in the manchette of the spermatids, a transient structure enriched in interconnected microtubules (at protein level).

The protein resides in the membrane. Functionally, may play a role in stabilizing dense microtubular networks or in vesicular trafficking. The polypeptide is Kinocilin (Kncn) (Mus musculus (Mouse)).